The following is a 176-amino-acid chain: ATP-dependent protease subunit HslV (176 aa).

Thr2 is an active-site residue. Gly157, Cys160, and Thr163 together coordinate Na(+).

Belongs to the peptidase T1B family. HslV subfamily. In terms of assembly, a double ring-shaped homohexamer of HslV is capped on each side by a ring-shaped HslU homohexamer. The assembly of the HslU/HslV complex is dependent on binding of ATP.

It localises to the cytoplasm. The enzyme catalyses ATP-dependent cleavage of peptide bonds with broad specificity.. Its activity is regulated as follows. Allosterically activated by HslU binding. Its function is as follows. Protease subunit of a proteasome-like degradation complex believed to be a general protein degrading machinery. The sequence is that of ATP-dependent protease subunit HslV from Escherichia coli O45:K1 (strain S88 / ExPEC).